Here is a 208-residue protein sequence, read N- to C-terminus: Probable GTP-binding protein EngB (208 aa).

In terms of domain architecture, EngB-type G spans 23-205; it reads LTSEMVILGR…RQTLLKYLLT (183 aa). GTP contacts are provided by residues 31 to 38, 57 to 61, 84 to 87, 154 to 157, and 182 to 184; these read GRSNVGKS, GKTRL, DLPG, TKFD, and FNA. Ser-38 and Thr-59 together coordinate Mg(2+).

Belongs to the TRAFAC class TrmE-Era-EngA-EngB-Septin-like GTPase superfamily. EngB GTPase family. The cofactor is Mg(2+).

Functionally, necessary for normal cell division and for the maintenance of normal septation. The polypeptide is Probable GTP-binding protein EngB (Helicobacter pylori (strain J99 / ATCC 700824) (Campylobacter pylori J99)).